The primary structure comprises 473 residues: ATP synthase subunit beta (473 aa).

ATP is bound at residue 158 to 165; that stretch reads GGAGVGKT.

This sequence belongs to the ATPase alpha/beta chains family. In terms of assembly, F-type ATPases have 2 components, CF(1) - the catalytic core - and CF(0) - the membrane proton channel. CF(1) has five subunits: alpha(3), beta(3), gamma(1), delta(1), epsilon(1). CF(0) has three main subunits: a(1), b(2) and c(9-12). The alpha and beta chains form an alternating ring which encloses part of the gamma chain. CF(1) is attached to CF(0) by a central stalk formed by the gamma and epsilon chains, while a peripheral stalk is formed by the delta and b chains.

The protein localises to the cell membrane. The catalysed reaction is ATP + H2O + 4 H(+)(in) = ADP + phosphate + 5 H(+)(out). In terms of biological role, produces ATP from ADP in the presence of a proton gradient across the membrane. The catalytic sites are hosted primarily by the beta subunits. The chain is ATP synthase subunit beta from Priestia megaterium (strain ATCC 12872 / QMB1551) (Bacillus megaterium).